Consider the following 210-residue polypeptide: Large ribosomal subunit protein uL4 (210 aa).

Residues 46–96 (QGNASTKTRAEVRGGGRKPWRQKGTGRARAGSNRSPLWRGGGVIFGPKPRD) form a disordered region. Residues 60–71 (GGRKPWRQKGTG) show a composition bias toward basic residues.

The protein belongs to the universal ribosomal protein uL4 family. In terms of assembly, part of the 50S ribosomal subunit.

Functionally, one of the primary rRNA binding proteins, this protein initially binds near the 5'-end of the 23S rRNA. It is important during the early stages of 50S assembly. It makes multiple contacts with different domains of the 23S rRNA in the assembled 50S subunit and ribosome. Forms part of the polypeptide exit tunnel. This chain is Large ribosomal subunit protein uL4, found in Gloeothece citriformis (strain PCC 7424) (Cyanothece sp. (strain PCC 7424)).